We begin with the raw amino-acid sequence, 203 residues long: Holliday junction branch migration complex subunit RuvA (203 aa).

The tract at residues methionine 1–asparagine 64 is domain I. The tract at residues asparagine 65–proline 142 is domain II. A flexible linker region spans residues alanine 143 to proline 154. The domain III stretch occupies residues threonine 155–leucine 203.

It belongs to the RuvA family. As to quaternary structure, homotetramer. Forms an RuvA(8)-RuvB(12)-Holliday junction (HJ) complex. HJ DNA is sandwiched between 2 RuvA tetramers; dsDNA enters through RuvA and exits via RuvB. An RuvB hexamer assembles on each DNA strand where it exits the tetramer. Each RuvB hexamer is contacted by two RuvA subunits (via domain III) on 2 adjacent RuvB subunits; this complex drives branch migration. In the full resolvosome a probable DNA-RuvA(4)-RuvB(12)-RuvC(2) complex forms which resolves the HJ.

It localises to the cytoplasm. Its function is as follows. The RuvA-RuvB-RuvC complex processes Holliday junction (HJ) DNA during genetic recombination and DNA repair, while the RuvA-RuvB complex plays an important role in the rescue of blocked DNA replication forks via replication fork reversal (RFR). RuvA specifically binds to HJ cruciform DNA, conferring on it an open structure. The RuvB hexamer acts as an ATP-dependent pump, pulling dsDNA into and through the RuvAB complex. HJ branch migration allows RuvC to scan DNA until it finds its consensus sequence, where it cleaves and resolves the cruciform DNA. The protein is Holliday junction branch migration complex subunit RuvA of Salmonella agona (strain SL483).